A 149-amino-acid polypeptide reads, in one-letter code: Protegrin-3 (149 aa).

An N-terminal signal peptide occupies residues 1-29; it reads METQRASLCLGRWSLWLLLLALVVPSASA. Positions 30–130 are excised as a propeptide; that stretch reads QALSYREAVL…DITCNEVQGV (101 aa). Residues 61 to 80 form a disordered region; that stretch reads DQPPKADEDPGTPKPVSFTV. Intrachain disulfides connect Cys-85–Cys-96, Cys-107–Cys-124, Cys-136–Cys-145, and Cys-138–Cys-143. Residue Arg-148 is modified to Arginine amide.

It belongs to the cathelicidin family.

The protein localises to the secreted. In terms of biological role, microbicidal activity. Active against E.coli, Listeria monocytogenes and C.albicans, in vitro. The sequence is that of Protegrin-3 (NPG3) from Sus scrofa (Pig).